Consider the following 321-residue polypeptide: Glucokinase (321 aa).

8 to 13 lines the ATP pocket; it reads GDVGGT.

The protein belongs to the bacterial glucokinase family.

Its subcellular location is the cytoplasm. It carries out the reaction D-glucose + ATP = D-glucose 6-phosphate + ADP + H(+). In Pectobacterium atrosepticum (strain SCRI 1043 / ATCC BAA-672) (Erwinia carotovora subsp. atroseptica), this protein is Glucokinase.